Here is a 153-residue protein sequence, read N- to C-terminus: UPF0756 membrane protein NT01CX_1209 (153 aa).

The next 4 helical transmembrane spans lie at 5–25 (IILL…LGIA), 45–65 (ENHF…IPII), 83–103 (IVCF…VGFL), and 113–133 (IILG…GPLI).

The protein belongs to the UPF0756 family.

The protein resides in the cell membrane. The chain is UPF0756 membrane protein NT01CX_1209 from Clostridium novyi (strain NT).